Consider the following 225-residue polypeptide: 7-cyano-7-deazaguanine synthase (225 aa).

Position 9-19 (9-19 (YSGGLDSTTCL)) interacts with ATP. 4 residues coordinate Zn(2+): Cys188, Cys198, Cys201, and Cys204.

It belongs to the QueC family. Zn(2+) is required as a cofactor.

The catalysed reaction is 7-carboxy-7-deazaguanine + NH4(+) + ATP = 7-cyano-7-deazaguanine + ADP + phosphate + H2O + H(+). It functions in the pathway purine metabolism; 7-cyano-7-deazaguanine biosynthesis. In terms of biological role, catalyzes the ATP-dependent conversion of 7-carboxy-7-deazaguanine (CDG) to 7-cyano-7-deazaguanine (preQ(0)). The chain is 7-cyano-7-deazaguanine synthase from Citrifermentans bemidjiense (strain ATCC BAA-1014 / DSM 16622 / JCM 12645 / Bem) (Geobacter bemidjiensis).